We begin with the raw amino-acid sequence, 157 residues long: MGFPKVERLLINYKTLDEFKKFKGCGAQELSMLEELQANIIENDSESPFYGIYYGGSLIARMSLYMKRNGGEPFEITGTYLELYKLEVLPNFQKQGFGEMLVNYAKGLQFPIKTIARIHSAGFWDKLNFQPVSVPDGDFYVWHPEVNLNTVTNEESA.

The N-acetyltransferase domain occupies L9–N147.

This is an uncharacterized protein from Bacillus cereus (strain 03BB102).